Reading from the N-terminus, the 373-residue chain is Unsaturated rhamnogalacturonyl hydrolase YteR (373 aa).

Residues 40-41 (HY), D88, and 132-136 (HKDGY) contribute to the substrate site. D143 (proton donor) is an active-site residue. Substrate is bound by residues 213–217 (RSIGW) and 333–334 (TS).

The protein belongs to the glycosyl hydrolase 105 family. Monomer.

Its subcellular location is the cytoplasm. The enzyme catalyses 2-O-(4-deoxy-beta-L-threo-hex-4-enopyranuronosyl)-alpha-L-rhamnose + H2O = 5-dehydro-4-deoxy-D-glucuronate + L-rhamnopyranose. Catalyzes the hydrolysis of unsaturated rhamnogalacturonan disaccharide to yield unsaturated D-galacturonic acid and L-rhamnose. It cannot act on unsaturated glucuronyl hydrolase (UGL) substrates containing unsaturated D-glucuronic acid at the non-reducing terminus, although the active pockets of YesR and UGL are very similar. The protein is Unsaturated rhamnogalacturonyl hydrolase YteR (yteR) of Bacillus subtilis (strain 168).